A 120-amino-acid polypeptide reads, in one-letter code: Large ribosomal subunit protein eL8 (120 aa).

It belongs to the eukaryotic ribosomal protein eL8 family. In terms of assembly, part of the 50S ribosomal subunit. Probably part of the RNase P complex.

It localises to the cytoplasm. Its function is as follows. Multifunctional RNA-binding protein that recognizes the K-turn motif in ribosomal RNA, the RNA component of RNase P, box H/ACA, box C/D and box C'/D' sRNAs. The chain is Large ribosomal subunit protein eL8 from Natronomonas pharaonis (strain ATCC 35678 / DSM 2160 / CIP 103997 / JCM 8858 / NBRC 14720 / NCIMB 2260 / Gabara) (Halobacterium pharaonis).